A 186-amino-acid polypeptide reads, in one-letter code: Membrane protein Rv1476 (186 aa).

The chain crosses the membrane as a helical span at residues 138-158; sequence FPWSALTIVLLIGVLAAAVGA. The tract at residues 166-186 is disordered; it reads RRSATSTDAAPGAGDDLNQGV.

It localises to the membrane. Its function is as follows. May affect the expression of genes linked to host macrophage apoptosis and immune response, thereby promoting the survival of M.tuberculosis in host macrophages. Overexpression of the gene increases susceptibility of the bacteria to various stresses, but promotes intracellular survival in host macrophages. It has no impact on the growth rate in vitro. Overexpression causes changes in the transcriptome of THP-1 cells, including expression of genes involved in cell proliferation, fatty acid degradation, cytokine-cytokine receptor interaction and immune response pathways. This chain is Membrane protein Rv1476, found in Mycobacterium tuberculosis (strain ATCC 25618 / H37Rv).